A 159-amino-acid chain; its full sequence is MRKAVCPGSFDPVTMGHLDIIGRAAQQYDEVTVLVTANPNKPSGMFTVDERLALIKESTAHFVNVKVDNWAGLLVDYTTANGIDAIVKGLRTALDYEYELPMAQMNRKLAGVDTLFLMTDPQYGYISSTLCKEVTKYGGDVSDMLPPAVAAAIVEKVKS.

Residue serine 9 coordinates substrate. Residues 9–10 (SF) and histidine 17 contribute to the ATP site. The substrate site is built by lysine 41, leucine 74, and lysine 88. Residues 89–91 (GLR), glutamate 99, and 123–129 (YGYISST) each bind ATP.

The protein belongs to the bacterial CoaD family. As to quaternary structure, homohexamer. Requires Mg(2+) as cofactor.

The protein resides in the cytoplasm. It carries out the reaction (R)-4'-phosphopantetheine + ATP + H(+) = 3'-dephospho-CoA + diphosphate. It participates in cofactor biosynthesis; coenzyme A biosynthesis; CoA from (R)-pantothenate: step 4/5. Its function is as follows. Reversibly transfers an adenylyl group from ATP to 4'-phosphopantetheine, yielding dephospho-CoA (dPCoA) and pyrophosphate. In Corynebacterium diphtheriae (strain ATCC 700971 / NCTC 13129 / Biotype gravis), this protein is Phosphopantetheine adenylyltransferase.